A 45-amino-acid chain; its full sequence is Photosystem II reaction center protein K (45 aa).

Positions 1-8 are excised as a propeptide; that stretch reads MEGILFLA. A helical transmembrane segment spans residues 24 to 44; that stretch reads APVIPVFFLLLAFVWQAAVGF.

This sequence belongs to the PsbK family. PSII is composed of 1 copy each of membrane proteins PsbA, PsbB, PsbC, PsbD, PsbE, PsbF, PsbH, PsbI, PsbJ, PsbK, PsbL, PsbM, PsbT, PsbX, PsbY, PsbZ, Psb30/Ycf12, at least 3 peripheral proteins of the oxygen-evolving complex and a large number of cofactors. It forms dimeric complexes.

Its subcellular location is the plastid. It localises to the chloroplast thylakoid membrane. Functionally, one of the components of the core complex of photosystem II (PSII). PSII is a light-driven water:plastoquinone oxidoreductase that uses light energy to abstract electrons from H(2)O, generating O(2) and a proton gradient subsequently used for ATP formation. It consists of a core antenna complex that captures photons, and an electron transfer chain that converts photonic excitation into a charge separation. The protein is Photosystem II reaction center protein K of Guillardia theta (Cryptophyte).